The chain runs to 243 residues: UPF0280 protein Memar_1519 (243 aa).

The protein belongs to the UPF0280 family.

This is UPF0280 protein Memar_1519 from Methanoculleus marisnigri (strain ATCC 35101 / DSM 1498 / JR1).